A 97-amino-acid polypeptide reads, in one-letter code: Down syndrome critical region protein 8 (97 aa).

As to expression, expressed in numerous tissues; not found in breast, heart, small intestine and liver. Isoform 1: Predominantly expressed in the testis. Isoform 3: Predominantly expressed in the testis, at lower level in the placenta, during malignant progression of melanocytic tumors and in several tumors of varying origins. Isoform 4: Predominantly expressed in the testis, at lower level in the placenta, during malignant progression of melanocytic tumors and in several tumors of varying origins. Isoform 5: Predominantly expressed in the testis. Isoform 6: Predominantly expressed in the testis.

The sequence is that of Down syndrome critical region protein 8 from Homo sapiens (Human).